A 125-amino-acid polypeptide reads, in one-letter code: Fluoride-specific ion channel FluC (125 aa).

The next 2 helical transmembrane spans lie at 4-24 and 34-54; these read LWVA…GVWI and YGTF…LTVL. Na(+)-binding residues include Gly74 and Thr77. Residues 99–119 form a helical membrane-spanning segment; sequence VLYFGSSLALGILAVWLGMVV.

This sequence belongs to the fluoride channel Fluc/FEX (TC 1.A.43) family.

It is found in the cell inner membrane. The catalysed reaction is fluoride(in) = fluoride(out). Its activity is regulated as follows. Na(+) is not transported, but it plays an essential structural role and its presence is essential for fluoride channel function. Fluoride-specific ion channel. Important for reducing fluoride concentration in the cell, thus reducing its toxicity. This is Fluoride-specific ion channel FluC from Acidobacterium capsulatum (strain ATCC 51196 / DSM 11244 / BCRC 80197 / JCM 7670 / NBRC 15755 / NCIMB 13165 / 161).